Reading from the N-terminus, the 231-residue chain is 26S proteasome non-ATPase regulatory subunit 10 (231 aa).

ANK repeat units follow at residues 3-36 (GCVS…ATRT), 37-69 (DQDS…VNDK), 70-102 (DDAG…VNAV), 103-135 (NQNG…PDAK), 136-168 (DHYD…TNIQ), 169-201 (DTEG…IYIE), and 202-226 (NKEE…LAES).

As to quaternary structure, part of transient complex containing PSMD10, PSMC4, PSMC5 and PAAF1 formed during the assembly of the 26S proteasome. Stays associated throughout the assembly of the PA700/19S RC and is released upon association with the 20S core. Interacts with PSMC4. Interacts with RB1. Interacts with CDK4. Interacts with MDM2. Interacts with RELA. Associates with a CDK4:CCND2 serine/threonine kinase complex. Interacts with ARHGDIA and increases the interaction between ARHGDIA and RHOA, hence promotes ARHGDIA inactivation of RHOA and ROCK.

It is found in the cytoplasm. The protein resides in the nucleus. Functionally, acts as a chaperone during the assembly of the 26S proteasome, specifically of the PA700/19S regulatory complex (RC). In the initial step of the base subcomplex assembly is part of an intermediate PSMD10:PSMC4:PSMC5:PAAF1 module which probably assembles with a PSMD5:PSMC2:PSMC1:PSMD2 module. Independently of the proteasome, regulates EGF-induced AKT activation through inhibition of the RHOA/ROCK/PTEN pathway, leading to prolonged AKT activation. Plays an important role in RAS-induced tumorigenesis. Its function is as follows. Acts as an oncoprotein by being involved in negative regulation of tumor suppressors RB1 and p53/TP53. Overexpression is leading to phosphorylation of RB1 and proteasomal degradation of RB1. Regulates CDK4-mediated phosphorylation of RB1 by competing with CDKN2A for binding with CDK4. Facilitates binding of MDM2 to p53/TP53 and the mono- and polyubiquitination of p53/TP53 by MDM2 suggesting a function in targeting the TP53:MDM2 complex to the 26S proteasome. Involved in p53-independent apoptosis. Involved in regulation of NF-kappa-B by retaining it in the cytoplasm. Binds to the NF-kappa-B component RELA and accelerates its XPO1/CRM1-mediated nuclear export. This Mus musculus (Mouse) protein is 26S proteasome non-ATPase regulatory subunit 10 (Psmd10).